A 714-amino-acid polypeptide reads, in one-letter code: Palmitoyltransferase ZDHHC5 (714 aa).

Residues 1-13 lie on the Cytoplasmic side of the membrane; that stretch reads MPAESAKRFKPSK. A helical transmembrane segment spans residues 14 to 34; sequence YVPVSAAAIFLVGATTLFFAF. The Extracellular portion of the chain corresponds to 35–52; that stretch reads TCPGLSLSVSPAVPVYNA. Residues 53 to 73 traverse the membrane as a helical segment; that stretch reads VVFLFVLANFSMATFMDPGVF. Residues 74–148 are Cytoplasmic-facing; sequence PRAEEDEDKE…NCIGRRNYRY (75 aa). Phosphotyrosine is present on Tyr91. A DHHC domain is found at 104 to 154; it reads KWCATCRFYRPPRCSHCSVCDNCVEEFDHHCPWVNNCIGRRNYRYFFLFLL. Cys134 functions as the S-palmitoyl cysteine intermediate in the catalytic mechanism. The helical transmembrane segment at 149–169 threads the bilayer; it reads FFLFLLSLTAHITGVFGFGLL. Residues 170–191 are Extracellular-facing; sequence YVLYHMEELSGVRTAVTMAVMC. Residues 192–212 traverse the membrane as a helical segment; it reads VAGLFFIPVAGLTGFHVVLVA. Over 213 to 714 the chain is Cytoplasmic; it reads RGRTTNEQVT…VGGTTYEISV (502 aa). Ser247 carries the phosphoserine modification. The tract at residues 289 to 714 is disordered; the sequence is GELRRTKSKG…VGGTTYEISV (426 aa). Phosphothreonine is present on Thr294. Phosphoserine is present on residues Ser296 and Ser299. Thr303 carries the post-translational modification Phosphothreonine. At Ser345 the chain carries Phosphoserine. 2 positions are modified to phosphothreonine: Thr348 and Thr350. Residues 359-373 show a composition bias toward low complexity; sequence SSSSASAAMPHSSSA. Phosphoserine is present on residues Ser380, Ser398, Ser406, and Ser409. Residues 388–398 are compositionally biased toward polar residues; it reads AESSRQPSYRS. Residue Thr411 is modified to Phosphothreonine. Residues 422–432 are compositionally biased toward low complexity; it reads SSGSRSSSLKS. Residues Ser425, Ser429, and Ser432 each carry the phosphoserine modification. Position 436 is a phosphothreonine (Thr436). A compositionally biased stretch (polar residues) spans 445 to 478; that stretch reads SIRSEGTTSTSYKSLANQTRNGSLSYDSLLTPSD. Phosphoserine is present on residues Ser529 and Ser554. Arg616 carries the post-translational modification Omega-N-methylarginine. A Phosphoserine modification is found at Ser620. Phosphothreonine is present on Thr658. Positions 667–678 are enriched in polar residues; sequence TAYSKSNGQPKS. Positions 683 to 692 are enriched in pro residues; sequence PPGPGQPPLS. At Ser693 the chain carries Phosphoserine. At Arg696 the chain carries Omega-N-methylarginine.

It belongs to the DHHC palmitoyltransferase family. ERF2/ZDHHC9 subfamily. Post-translationally, phosphorylation regulates association with endocytic proteins and its subcellular localization. Phosphorylation by LYN during fatty acid uptake leads to inactivation of the activity. Autopalmitoylated. Palmitoylation of the C-terminal tail regulates stimulation-dependent plasma membrane motility.

It is found in the cell membrane. The catalysed reaction is L-cysteinyl-[protein] + hexadecanoyl-CoA = S-hexadecanoyl-L-cysteinyl-[protein] + CoA. In terms of biological role, palmitoyltransferase that catalyzes the addition of palmitate onto various protein substrates such as CTNND2, CD36, GSDMD, NLRP3, NOD1, NOD2, STAT3 and S1PR1 thus plays a role in various biological processes including cell adhesion, inflammation, fatty acid uptake, bacterial sensing or cardiac functions. Plays an important role in the regulation of synapse efficacy by mediating palmitoylation of delta-catenin/CTNND2, thereby increasing synaptic delivery and surface stabilization of alpha-amino-3-hydroxy-5-methyl-4-isoxazole propionic acid receptors (AMPARs). Under basal conditions, remains at the synaptic membrane through FYN-mediated phosphorylation that prevents association with endocytic proteins. Neuronal activity enhances the internalization and trafficking of DHHC5 from spines to dendritic shafts where it palmitoylates delta-catenin/CTNND2. Regulates cell adhesion at the plasma membrane by palmitoylating GOLGA7B and DSG2. Plays a role in innate immune response by mediating the palmitoylation of NOD1 and NOD2 and their proper recruitment to the bacterial entry site and phagosomes. Also participates in fatty acid uptake by palmitoylating CD36 and thereby targeting it to the plasma membrane. Upon binding of fatty acids to CD36, gets phosphorylated by LYN leading to inactivation and subsequent CD36 caveolar endocytosis. Controls oligodendrocyte development by catalyzing STAT3 palmitoylation. Acts as a regulator of inflammatory response by mediating palmitoylation of NLRP3 and GSDMD. Palmitoylates NLRP3 to promote inflammasome assembly and activation. Activates pyroptosis by catalyzing palmitoylation of gasdermin-D (GSDMD), thereby promoting membrane translocation and pore formation of GSDMD. The sequence is that of Palmitoyltransferase ZDHHC5 (ZDHHC5) from Bos taurus (Bovine).